Consider the following 104-residue polypeptide: U20-lycotoxin-Ls1a (104 aa).

The N-terminal stretch at Met1–Ala30 is a signal peptide. Residues Gly31–Ser76 form the WAP domain. Disulfide bonds link Cys34/Cys64, Cys42/Cys68, Cys51/Cys63, Cys52/Cys90, and Cys57/Cys72.

This sequence belongs to the venom protein 11 family. 02 (wap-2) subfamily. In terms of processing, contains 5 disulfide bonds. Expressed by the venom gland.

The protein resides in the secreted. Its function is as follows. Has antibacterial activity. The sequence is that of U20-lycotoxin-Ls1a from Lycosa singoriensis (Wolf spider).